We begin with the raw amino-acid sequence, 422 residues long: Tryptophan synthase beta chain 1 (422 aa).

K107 is modified (N6-(pyridoxal phosphate)lysine).

The protein belongs to the TrpB family. As to quaternary structure, tetramer of two alpha and two beta chains. The cofactor is pyridoxal 5'-phosphate.

It carries out the reaction (1S,2R)-1-C-(indol-3-yl)glycerol 3-phosphate + L-serine = D-glyceraldehyde 3-phosphate + L-tryptophan + H2O. The protein operates within amino-acid biosynthesis; L-tryptophan biosynthesis; L-tryptophan from chorismate: step 5/5. In terms of biological role, the beta subunit is responsible for the synthesis of L-tryptophan from indole and L-serine. The polypeptide is Tryptophan synthase beta chain 1 (trpB1) (Sulfurisphaera tokodaii (strain DSM 16993 / JCM 10545 / NBRC 100140 / 7) (Sulfolobus tokodaii)).